The sequence spans 229 residues: Type-5 uracil-DNA glycosylase (229 aa).

Residues Cys19, Cys22, Cys123, and Cys138 each contribute to the [4Fe-4S] cluster site.

This sequence belongs to the uracil-DNA glycosylase (UDG) superfamily. Type 5 (UDGb) family.

Its function is as follows. DNA glycosylase with broad substrate specificity. The chain is Type-5 uracil-DNA glycosylase from Mycobacterium leprae (strain TN).